A 142-amino-acid chain; its full sequence is Autophagy-related protein 31 (142 aa).

It is found in the cytoplasm. Its subcellular location is the cytoskeleton. The protein localises to the preautophagosomal structure. Functionally, plays a role in starvation-induced autophagy. Involved in mitophagy. Functions with ATG17 and ATG29 at the preautophagosomal structure (PAS) in order to form normal autophagosomes under starvation conditions. May be involved in microtubule function, such as chromosome segregation and karyogamy. The sequence is that of Autophagy-related protein 31 (CIS1) from Eremothecium gossypii (strain ATCC 10895 / CBS 109.51 / FGSC 9923 / NRRL Y-1056) (Yeast).